A 60-amino-acid chain; its full sequence is Cytotoxin 5 (60 aa).

4 disulfide bridges follow: cysteine 3/cysteine 21, cysteine 14/cysteine 38, cysteine 42/cysteine 53, and cysteine 54/cysteine 59.

The protein belongs to the three-finger toxin family. Short-chain subfamily. Type IA cytotoxin sub-subfamily. As to quaternary structure, monomer in solution; Homodimer and oligomer in the presence of negatively charged lipids forming a pore with a size ranging between 20 and 30 Angstroms. As to expression, expressed by the venom gland.

It is found in the secreted. The protein localises to the target cell membrane. Its function is as follows. Basic protein that binds to cell membrane and depolarizes cardiomyocytes. It also possesses lytic activity on many other cells, including red blood cells. Interaction with sulfatides in the cell membrane induces pore formation and cell internalization and is responsible for cytotoxicity in cardiomyocytes. It targets the mitochondrial membrane and induces mitochondrial swelling and fragmentation. Inhibits protein kinases C. It binds to the integrin alpha-V/beta-3 with a moderate affinity. Is cardiotoxic and cytocidal to Yoshida sarcoma cells. The polypeptide is Cytotoxin 5 (Naja atra (Chinese cobra)).